The sequence spans 357 residues: 39 kDa FK506-binding nuclear protein (357 aa).

Residue Ser-92 is modified to Phosphoserine. The tract at residues 113–251 is disordered; it reads KNSKKSEDDE…ASKDPRTITG (139 aa). Acidic residues predominate over residues 120–182; it reads DDEDENESGE…QDSDDSEAEE (63 aa). 2 positions are modified to phosphoserine: Ser-193 and Ser-197. Positions 222–237 are enriched in basic and acidic residues; that stretch reads EKPEAKKEQPKAKEPA. Residues 269 to 357 form the PPIase FKBP-type domain; sequence GKRVSVYYIG…VFEVELKAVH (89 aa).

The protein belongs to the FKBP-type PPIase family. Ubiquitously expressed, highest levels in ovary.

The protein localises to the nucleus. The catalysed reaction is [protein]-peptidylproline (omega=180) = [protein]-peptidylproline (omega=0). PPIases accelerate the folding of proteins. May function in a signal transduction cascade during early development. This is 39 kDa FK506-binding nuclear protein from Drosophila melanogaster (Fruit fly).